Consider the following 227-residue polypeptide: 7-cyano-7-deazaguanine synthase (227 aa).

7–17 (LSGGMDSLVTT) serves as a coordination point for ATP. The Zn(2+) site is built by cysteine 187, cysteine 195, cysteine 198, and cysteine 201.

This sequence belongs to the QueC family. Requires Zn(2+) as cofactor.

The catalysed reaction is 7-carboxy-7-deazaguanine + NH4(+) + ATP = 7-cyano-7-deazaguanine + ADP + phosphate + H2O + H(+). The protein operates within purine metabolism; 7-cyano-7-deazaguanine biosynthesis. In terms of biological role, catalyzes the ATP-dependent conversion of 7-carboxy-7-deazaguanine (CDG) to 7-cyano-7-deazaguanine (preQ(0)). The sequence is that of 7-cyano-7-deazaguanine synthase from Chlorobium luteolum (strain DSM 273 / BCRC 81028 / 2530) (Pelodictyon luteolum).